The chain runs to 429 residues: E3 ubiquitin-protein ligase ZNRF4 (429 aa).

A signal peptide spans 1–27 (MLRCRPEPLMPRATRVAVAVSLPLSHA). Residues 28–250 (VIPTQLPSHP…PPCRDLDCHP (223 aa)) lie on the Lumenal side of the membrane. The disordered stretch occupies residues 30 to 64 (PTQLPSHPGHRPSGRPRRCPKAPCLPSPVGLSSTQ). Residues 37-49 (PGHRPSGRPRRCP) show a composition bias toward basic residues. The N-linked (GlcNAc...) asparagine glycan is linked to asparagine 152. Positions 152–223 (NRSLGAIALI…VGEAASQDLR (72 aa)) constitute a PA domain. A helical transmembrane segment spans residues 251 to 271 (VLTVSWALGRTLALVVSTLFV). Residues 272-429 (LNRLWLWAQA…SPAPPEAPGQ (158 aa)) are Cytoplasmic-facing. The segment at 309 to 352 (CAICLDEYEEGDQLKILPCSHTYHCKCIDPWFSQAPRRSCPVCK) adopts an RING-type; atypical zinc-finger fold. Disordered stretches follow at residues 358 to 381 (TEDS…GHRP) and 409 to 429 (TTSL…APGQ). Residues 409-420 (TTSLEAEDTTVS) show a composition bias toward polar residues.

In terms of assembly, interacts with CANX.

It localises to the endoplasmic reticulum membrane. It carries out the reaction S-ubiquitinyl-[E2 ubiquitin-conjugating enzyme]-L-cysteine + [acceptor protein]-L-lysine = [E2 ubiquitin-conjugating enzyme]-L-cysteine + N(6)-ubiquitinyl-[acceptor protein]-L-lysine.. It functions in the pathway protein modification; protein ubiquitination. E3 ubiquitin-protein ligase that acts as a negative regulator of NOD2 signaling by mediating ubiquitination and degradation of RIPK2. Also catalyzes ubiquitination and proteasomal degradation of CANX within the endoplasmic reticulum. Could have a role in spermatogenesis. This Macaca fascicularis (Crab-eating macaque) protein is E3 ubiquitin-protein ligase ZNRF4 (ZNRF4).